A 917-amino-acid chain; its full sequence is Auxin response factor 17 (917 aa).

Positions 134-236 (FCKTLTASDT…QLLLGIRRAN (103 aa)) form a DNA-binding region, TF-B3. The disordered stretch occupies residues 571-649 (SVPNALSPFS…RPTAVPVPDP (79 aa)). Composition is skewed to low complexity over residues 576-594 (LSPF…MTLQ) and 604-620 (SYPD…NTST). The 85-residue stretch at 786-870 (ATFVKVYKSG…SCIKILSPQE (85 aa)) folds into the PB1 domain.

The protein belongs to the ARF family. In terms of assembly, homodimers and heterodimers.

The protein resides in the nucleus. Functionally, auxin response factors (ARFs) are transcriptional factors that bind specifically to the DNA sequence 5'-TGTCTC-3' found in the auxin-responsive promoter elements (AuxREs). The chain is Auxin response factor 17 (ARF17) from Oryza sativa subsp. indica (Rice).